Consider the following 338-residue polypeptide: Ketol-acid reductoisomerase (NADP(+)) (338 aa).

The 181-residue stretch at 3 to 183 (IDVFYDDDAD…GGARAGVIPT (181 aa)) folds into the KARI N-terminal Rossmann domain. NADP(+)-binding positions include 26–29 (YGSQ), R49, S52, S54, and 84–87 (DTSQ). H109 is an active-site residue. Residue G135 participates in NADP(+) binding. Residues 184-329 (TFEAETVTDL…AKLRDLMSWV (146 aa)) enclose the KARI C-terminal knotted domain. Mg(2+) is bound by residues D192, E196, E228, and E232. A substrate-binding site is contributed by S253.

The protein belongs to the ketol-acid reductoisomerase family. Mg(2+) serves as cofactor.

It catalyses the reaction (2R)-2,3-dihydroxy-3-methylbutanoate + NADP(+) = (2S)-2-acetolactate + NADPH + H(+). The enzyme catalyses (2R,3R)-2,3-dihydroxy-3-methylpentanoate + NADP(+) = (S)-2-ethyl-2-hydroxy-3-oxobutanoate + NADPH + H(+). Its pathway is amino-acid biosynthesis; L-isoleucine biosynthesis; L-isoleucine from 2-oxobutanoate: step 2/4. The protein operates within amino-acid biosynthesis; L-valine biosynthesis; L-valine from pyruvate: step 2/4. In terms of biological role, involved in the biosynthesis of branched-chain amino acids (BCAA). Catalyzes an alkyl-migration followed by a ketol-acid reduction of (S)-2-acetolactate (S2AL) to yield (R)-2,3-dihydroxy-isovalerate. In the isomerase reaction, S2AL is rearranged via a Mg-dependent methyl migration to produce 3-hydroxy-3-methyl-2-ketobutyrate (HMKB). In the reductase reaction, this 2-ketoacid undergoes a metal-dependent reduction by NADPH to yield (R)-2,3-dihydroxy-isovalerate. The protein is Ketol-acid reductoisomerase (NADP(+)) of Corynebacterium jeikeium (strain K411).